The following is a 105-amino-acid chain: Met repressor (105 aa).

This sequence belongs to the MetJ family. As to quaternary structure, homodimer.

Its subcellular location is the cytoplasm. Functionally, this regulatory protein, when combined with SAM (S-adenosylmethionine) represses the expression of the methionine regulon and of enzymes involved in SAM synthesis. This is Met repressor from Sodalis glossinidius (strain morsitans).